Consider the following 218-residue polypeptide: Small ribosomal subunit protein uS5 (218 aa).

The region spanning 55-118 is the S5 DRBM domain; sequence LDHEVIDVSI…RNAKLNIIPV (64 aa).

The protein belongs to the universal ribosomal protein uS5 family. Part of the 30S ribosomal subunit. Contacts protein S4.

Its function is as follows. With S4 and S12 plays an important role in translational accuracy. The protein is Small ribosomal subunit protein uS5 of Aeropyrum pernix (strain ATCC 700893 / DSM 11879 / JCM 9820 / NBRC 100138 / K1).